A 351-amino-acid chain; its full sequence is Muscleblind-like protein 2a (351 aa).

C3H1-type zinc fingers lie at residues 13-41, 47-73, 177-205, and 213-239; these read WLTLEVCRQFQRGTCSRSDEECKFAHPPK, NGRVIACFDSLKGRCTRENCKYLHPPA, TDKLEVCREFQRGNCARGETDCRFAHPSD, and DNTVTVCMDYIKSRCSREKCKYFHPPA.

This sequence belongs to the muscleblind family. As to expression, expressed in fast and slow myotomal muscle, heart, liver, skin, brain and testis.

The protein localises to the nucleus. The protein resides in the cytoplasm. Its function is as follows. Involved in pre-mRNA alternative splicing regulation. RNA-binding protein that binds to 5'ACACCC-3' core sequence. The polypeptide is Muscleblind-like protein 2a (mbnl2a) (Takifugu rubripes (Japanese pufferfish)).